We begin with the raw amino-acid sequence, 649 residues long: DNA mismatch repair protein MutL (649 aa).

Belongs to the DNA mismatch repair MutL/HexB family.

Functionally, this protein is involved in the repair of mismatches in DNA. It is required for dam-dependent methyl-directed DNA mismatch repair. May act as a 'molecular matchmaker', a protein that promotes the formation of a stable complex between two or more DNA-binding proteins in an ATP-dependent manner without itself being part of a final effector complex. The chain is DNA mismatch repair protein MutL from Streptococcus pneumoniae (strain JJA).